Here is a 1373-residue protein sequence, read N- to C-terminus: DNA-directed RNA polymerase subunit beta'' (1373 aa).

The Zn(2+) site is built by C224, C296, C303, and C306.

Belongs to the RNA polymerase beta' chain family. RpoC2 subfamily. In plastids the minimal PEP RNA polymerase catalytic core is composed of four subunits: alpha, beta, beta', and beta''. When a (nuclear-encoded) sigma factor is associated with the core the holoenzyme is formed, which can initiate transcription. The cofactor is Zn(2+).

It localises to the plastid. It is found in the chloroplast. It carries out the reaction RNA(n) + a ribonucleoside 5'-triphosphate = RNA(n+1) + diphosphate. DNA-dependent RNA polymerase catalyzes the transcription of DNA into RNA using the four ribonucleoside triphosphates as substrates. In Amborella trichopoda, this protein is DNA-directed RNA polymerase subunit beta''.